A 444-amino-acid polypeptide reads, in one-letter code: Interferon-induced protein 44 (444 aa).

Residues 1–152 form the TLDc domain; it reads MAVTTRLTWL…IQDYEVFRCE (152 aa).

Belongs to the IFI44 family. Hepatocytes.

The protein localises to the cytoplasm. Its function is as follows. This protein aggregates to form microtubular structures. This chain is Interferon-induced protein 44 (IFI44), found in Pan troglodytes (Chimpanzee).